We begin with the raw amino-acid sequence, 1510 residues long: Chromosome partition protein MukB (1510 aa).

A coiled-coil region spans residues 6 to 30 (ELENEIELESDEVIMENENVEEIVD). 75 to 82 (GGNGAGKS) contributes to the ATP binding site. 7 coiled-coil regions span residues 346–506 (QHRL…HKMS), 553–611 (QQTP…EDIS), 673–706 (MQSQ…RLSQ), 821–846 (SAAR…AQIA), 876–1064 (EALM…IQLQ), 1094–1149 (ERAR…RELV), and 1249–1304 (DAIE…LQNI). The tract at residues 707–824 (PDGSEDPRLN…EIPLFGSAAR (118 aa)) is flexible hinge.

This sequence belongs to the SMC family. MukB subfamily. Homodimerization via its hinge domain. Binds to DNA via its C-terminal region. Interacts, and probably forms a ternary complex, with MukE and MukF via its C-terminal region. The complex formation is stimulated by calcium or magnesium. Interacts with tubulin-related protein FtsZ.

The protein localises to the cytoplasm. It localises to the nucleoid. Plays a central role in chromosome condensation, segregation and cell cycle progression. Functions as a homodimer, which is essential for chromosome partition. Involved in negative DNA supercoiling in vivo, and by this means organize and compact chromosomes. May achieve or facilitate chromosome segregation by condensation DNA from both sides of a centrally located replisome during cell division. The protein is Chromosome partition protein MukB of Haemophilus influenzae (strain PittGG).